Here is a 385-residue protein sequence, read N- to C-terminus: Methionyl-tRNA formyltransferase, mitochondrial (385 aa).

This sequence belongs to the Fmt family.

It localises to the mitochondrion. The catalysed reaction is L-methionyl-tRNA(fMet) + (6R)-10-formyltetrahydrofolate = N-formyl-L-methionyl-tRNA(fMet) + (6S)-5,6,7,8-tetrahydrofolate + H(+). Its function is as follows. Methionyl-tRNA formyltransferase that formylates methionyl-tRNA in mitochondria and is crucial for translation initiation. The sequence is that of Methionyl-tRNA formyltransferase, mitochondrial (Mtfmt) from Rattus norvegicus (Rat).